Reading from the N-terminus, the 481-residue chain is Delta(14)-sterol reductase ERG24B (481 aa).

8 helical membrane passes run 11–31, 80–100, 125–145, 149–169, 244–264, 279–299, 313–333, and 427–447; these read FGGP…MQVL, LFAY…QIVL, LTGC…WTWI, YIQL…WTYL, TYGF…YYVL, ITSD…VPFL, HLGP…LYIF, and AAPW…FLLI.

It belongs to the ERG4/ERG24 family.

The protein localises to the endoplasmic reticulum membrane. The catalysed reaction is 4,4-dimethyl-5alpha-cholesta-8,24-dien-3beta-ol + NADP(+) = 4,4-dimethyl-5alpha-cholesta-8,14,24-trien-3beta-ol + NADPH + H(+). It functions in the pathway steroid metabolism; ergosterol biosynthesis. Delta(14)-sterol reductase; part of the third module of ergosterol biosynthesis pathway that includes the late steps of the pathway. Catalyzes the reduction of the C14=C15 double bond within 4,4,24-trimethyl ergosta-8,14,24(28)-trienolto produce 4,4-dimethylfecosterol. The third module or late pathway involves the ergosterol synthesis itself through consecutive reactions that mainly occur in the endoplasmic reticulum (ER) membrane. Firstly, the squalene synthase ERG9 catalyzes the condensation of 2 farnesyl pyrophosphate moieties to form squalene, which is the precursor of all steroids. Squalene synthase is crucial for balancing the incorporation of farnesyl diphosphate (FPP) into sterol and nonsterol isoprene synthesis. Secondly, squalene is converted into lanosterol by the consecutive action of the squalene epoxidase ERG1 and the lanosterol synthase ERG7. Then, the delta(24)-sterol C-methyltransferase ERG6 methylates lanosterol at C-24 to produce eburicol. Eburicol is the substrate of the sterol 14-alpha demethylase encoded by CYP51A, CYP51B and CYP51C, to yield 4,4,24-trimethyl ergosta-8,14,24(28)-trienol. CYP51B encodes the enzyme primarily responsible for sterol 14-alpha-demethylation, and plays an essential role in ascospore formation. CYP51A encodes an additional sterol 14-alpha-demethylase, induced on ergosterol depletion and responsible for the intrinsic variation in azole sensitivity. The third CYP51 isoform, CYP51C, does not encode a sterol 14-alpha-demethylase, but is required for full virulence on host wheat ears. The C-14 reductase ERG24 then reduces the C14=C15 double bond which leads to 4,4-dimethylfecosterol. A sequence of further demethylations at C-4, involving the C-4 demethylation complex containing the C-4 methylsterol oxidases ERG25, the sterol-4-alpha-carboxylate 3-dehydrogenase ERG26 and the 3-keto-steroid reductase ERG27, leads to the production of fecosterol via 4-methylfecosterol. ERG28 has a role as a scaffold to help anchor ERG25, ERG26 and ERG27 to the endoplasmic reticulum. The C-8 sterol isomerase ERG2 then catalyzes the reaction which results in unsaturation at C-7 in the B ring of sterols and thus converts fecosterol to episterol. The sterol-C5-desaturases ERG3A and ERG3BB then catalyze the introduction of a C-5 double bond in the B ring to produce 5-dehydroepisterol. The C-22 sterol desaturases ERG5A and ERG5B further convert 5-dehydroepisterol into ergosta-5,7,22,24(28)-tetraen-3beta-ol by forming the C-22(23) double bond in the sterol side chain. Finally, ergosta-5,7,22,24(28)-tetraen-3beta-ol is substrate of the C-24(28) sterol reductase ERG4 to produce ergosterol. The polypeptide is Delta(14)-sterol reductase ERG24B (Gibberella zeae (strain ATCC MYA-4620 / CBS 123657 / FGSC 9075 / NRRL 31084 / PH-1) (Wheat head blight fungus)).